We begin with the raw amino-acid sequence, 37 residues long: Large ribosomal subunit protein bL36 (37 aa).

The protein belongs to the bacterial ribosomal protein bL36 family.

This chain is Large ribosomal subunit protein bL36, found in Vibrio atlanticus (strain LGP32) (Vibrio splendidus (strain Mel32)).